Consider the following 96-residue polypeptide: Cobalt transport protein CbiN (96 aa).

The next 2 membrane-spanning stretches (helical) occupy residues 4–24 and 59–79; these read WLAA…VSAG and IESL…GYYL.

It belongs to the CbiN family. As to quaternary structure, forms an energy-coupling factor (ECF) transporter complex composed of an ATP-binding protein (A component, CbiO), a transmembrane protein (T component, CbiQ) and 2 possible substrate-capture proteins (S components, CbiM and CbiN) of unknown stoichimetry.

The protein resides in the cell membrane. It functions in the pathway cofactor biosynthesis; adenosylcobalamin biosynthesis. Its function is as follows. Part of the energy-coupling factor (ECF) transporter complex CbiMNOQ involved in cobalt import. In Halobacterium salinarum (strain ATCC 29341 / DSM 671 / R1), this protein is Cobalt transport protein CbiN.